A 433-amino-acid polypeptide reads, in one-letter code: Shufflon protein C' (433 aa).

Residues 1 to 361 form a constant region region; it reads MKKYDRGWAS…TGAILSCQSG (361 aa). Positions 362-433 are variable region; that stretch reads RWSGGNKINY…HVDAYCCPFN (72 aa).

This chain is Shufflon protein C', found in Escherichia coli.